Consider the following 164-residue polypeptide: uncharacterized protein (164 aa).

Polar residues predominate over residues 1–17 (MNSRVPATQSWFSSHLP). The tract at residues 1-48 (MNSRVPATQSWFSSHLPTTEPDLEPATAAEGSTTETATLSPETTSFND) is disordered. A compositionally biased stretch (low complexity) spans 24–45 (EPATAAEGSTTETATLSPETTS). Residues 64 to 84 (MLLSFGIITVIGLAVAMVLYI) traverse the membrane as a helical segment. Positions 106 to 130 (TEEQDELEQELLEHGRDAASMQAAA) form a coiled coil.

Its subcellular location is the membrane. This is an uncharacterized protein from Mus musculus (Mouse).